A 90-amino-acid chain; its full sequence is uncharacterized protein (90 aa).

The stretch at 36–82 (DQEYSDAQMQLEDAVNALNKLWLSSNDQQREQLYRMRLQLQSLQNNM) forms a coiled coil.

This is an uncharacterized protein from Bacillus subtilis (strain 168).